The primary structure comprises 785 residues: 5-methyltetrahydropteroyltriglutamate--homocysteine methyltransferase (785 aa).

5-methyltetrahydropteroyltri-L-glutamate contacts are provided by residues Arg-15 to Lys-18 and Lys-121. L-homocysteine-binding positions include Ile-460–Ser-462 and Glu-513. Residues Ile-460–Ser-462 and Glu-513 contribute to the L-methionine site. 5-methyltetrahydropteroyltri-L-glutamate contacts are provided by residues Arg-544 to Cys-545 and Trp-590. An L-homocysteine-binding site is contributed by Asp-628. Asp-628 contacts L-methionine. Residue Glu-634 coordinates 5-methyltetrahydropteroyltri-L-glutamate. Residues His-670, Cys-672, and Glu-694 each coordinate Zn(2+). The Proton donor role is filled by His-723. A Zn(2+)-binding site is contributed by Cys-755.

The protein belongs to the vitamin-B12 independent methionine synthase family. Zn(2+) serves as cofactor.

The catalysed reaction is 5-methyltetrahydropteroyltri-L-glutamate + L-homocysteine = tetrahydropteroyltri-L-glutamate + L-methionine. It functions in the pathway amino-acid biosynthesis; L-methionine biosynthesis via de novo pathway; L-methionine from L-homocysteine (MetE route): step 1/1. In terms of biological role, catalyzes the transfer of a methyl group from 5-methyltetrahydrofolate to homocysteine resulting in methionine formation. The protein is 5-methyltetrahydropteroyltriglutamate--homocysteine methyltransferase of Nitratidesulfovibrio vulgaris (strain ATCC 29579 / DSM 644 / CCUG 34227 / NCIMB 8303 / VKM B-1760 / Hildenborough) (Desulfovibrio vulgaris).